Here is a 372-residue protein sequence, read N- to C-terminus: Queuine tRNA-ribosyltransferase (372 aa).

Asp-92 (proton acceptor) is an active-site residue. Substrate contacts are provided by residues 92–96 (DSGGY), Asp-146, Gln-188, and Gly-215. The interval 246–252 (GIGSLRE) is RNA binding. Asp-265 acts as the Nucleophile in catalysis. An RNA binding; important for wobble base 34 recognition region spans residues 270-274 (TRLGR). Residues Cys-303, Cys-305, Cys-308, and His-334 each contribute to the Zn(2+) site.

Belongs to the queuine tRNA-ribosyltransferase family. Homodimer. Within each dimer, one monomer is responsible for RNA recognition and catalysis, while the other monomer binds to the replacement base PreQ1. Requires Zn(2+) as cofactor.

It catalyses the reaction 7-aminomethyl-7-carbaguanine + guanosine(34) in tRNA = 7-aminomethyl-7-carbaguanosine(34) in tRNA + guanine. It functions in the pathway tRNA modification; tRNA-queuosine biosynthesis. Functionally, catalyzes the base-exchange of a guanine (G) residue with the queuine precursor 7-aminomethyl-7-deazaguanine (PreQ1) at position 34 (anticodon wobble position) in tRNAs with GU(N) anticodons (tRNA-Asp, -Asn, -His and -Tyr). Catalysis occurs through a double-displacement mechanism. The nucleophile active site attacks the C1' of nucleotide 34 to detach the guanine base from the RNA, forming a covalent enzyme-RNA intermediate. The proton acceptor active site deprotonates the incoming PreQ1, allowing a nucleophilic attack on the C1' of the ribose to form the product. After dissociation, two additional enzymatic reactions on the tRNA convert PreQ1 to queuine (Q), resulting in the hypermodified nucleoside queuosine (7-(((4,5-cis-dihydroxy-2-cyclopenten-1-yl)amino)methyl)-7-deazaguanosine). The sequence is that of Queuine tRNA-ribosyltransferase from Prochlorococcus marinus (strain MIT 9312).